The chain runs to 462 residues: Hemopexin (462 aa).

Positions 1–23 are cleaved as a signal peptide; that stretch reads MARVLGAPVALGLWSLCWSLAIA. 2 O-linked (GalNAc...) threonine glycosylation sites follow: Thr24 and Thr29. The interval 29–48 is disordered; sequence TSAHGNVAEGETKPDPDVTE. The segment at 30–40 is O-glycosylated at one site; it reads SAHGNVAEGET. Basic and acidic residues predominate over residues 38–48; that stretch reads GETKPDPDVTE. 3 disulfides stabilise this stretch: Cys50–Cys231, Cys149–Cys154, and Cys188–Cys200. 4 Hemopexin repeats span residues 53–93, 94–139, 140–184, and 185–231; these read GWSF…WKNF, PSPV…FPGI, PSPL…SWPA, and VGNC…FMPC. An N-linked (GlcNAc...) (complex) asparagine glycan is attached at Asn64. His79 is a heme binding site. His150 provides a ligand contact to heme. N-linked (GlcNAc...) (complex) asparagine glycosylation occurs at Asn187. Heme is bound at residue His236. N-linked (GlcNAc...) asparagine glycans are attached at residues Asn240 and Asn246. 3 disulfides stabilise this stretch: Cys257–Cys460, Cys366–Cys408, and Cys418–Cys435. Hemopexin repeat units lie at residues 259–304, 305–352, 357–396, and 400–450; these read PHLV…WPQG, PSAV…VGTP, LDSVDAAFICPGSSRLHIMAGRRLWWLDLKSGAQATWTEL, and HEKV…ALPQ. His293 is a binding site for heme. An N-linked (GlcNAc...) (complex) asparagine glycan is attached at Asn453.

This sequence belongs to the hemopexin family. In terms of assembly, interacts with FLVCR1. (Microbial infection) Interacts with hepatitis E virus/HEV protein ORF3. N- and O-glycosylated. O-glycosylated with core 1 or possibly core 8 glycans. O-glycosylation in the 30-40 region is minor compared to glycosylation at Thr-24 and Thr-29. Expressed by the liver and secreted in plasma.

The protein resides in the secreted. In terms of biological role, binds heme and transports it to the liver for breakdown and iron recovery, after which the free hemopexin returns to the circulation. This chain is Hemopexin (HPX), found in Homo sapiens (Human).